Consider the following 60-residue polypeptide: Ferredoxin (60 aa).

4Fe-4S ferredoxin-type domains are found at residues 2-30 and 31-60; these read VTID…EIQG and DKVV…TVKE. [4Fe-4S] cluster is bound by residues cysteine 9, cysteine 14, cysteine 17, cysteine 21, cysteine 41, cysteine 44, cysteine 47, and cysteine 51.

[4Fe-4S] cluster serves as cofactor.

In terms of biological role, ferredoxins are iron-sulfur proteins that transfer electrons probably in the CO-dehydrogenase complex. The chain is Ferredoxin from Methanothermococcus thermolithotrophicus (Methanococcus thermolithotrophicus).